Reading from the N-terminus, the 211-residue chain is Inactive ribonuclease-like protein 10 (211 aa).

A signal peptide spans 1 to 24; the sequence is MKLTLVQIFFMMLLLLLGLGVGLG.

It belongs to the pancreatic ribonuclease family. In terms of processing, the N-terminus is blocked. Glycosylated.

The protein localises to the secreted. Secreted proximal epididymal protein required for post-testicular sperm maturation and male fertility. May be involved in sperm adhesion to the egg zona pellucida. Does not have ribonuclease activity. In Bos taurus (Bovine), this protein is Inactive ribonuclease-like protein 10 (RNASE10).